Here is a 427-residue protein sequence, read N- to C-terminus: UBX domain-containing protein 2 (427 aa).

2 disordered regions span residues 115–143 (FDQS…SRAS) and 273–331 (ETSG…GVAD). The span at 311-326 (STTESQGESSSQQAES) shows a compositional bias: low complexity. The 77-residue stretch at 349 to 425 (PGPNVTRIQI…GIQNTALQFE (77 aa)) folds into the UBX domain. S371 is modified (phosphoserine).

As to quaternary structure, interacts with cdc48.

In terms of biological role, involved in CDC48-dependent protein degradation through the ubiquitin/proteasome pathway. The sequence is that of UBX domain-containing protein 2 (ubx2) from Schizosaccharomyces pombe (strain 972 / ATCC 24843) (Fission yeast).